The chain runs to 486 residues: ATP synthase subunit beta 2 (486 aa).

Residue 166 to 173 (GGAGVGKT) participates in ATP binding.

Belongs to the ATPase alpha/beta chains family. As to quaternary structure, F-type ATPases have 2 components, CF(1) - the catalytic core - and CF(0) - the membrane proton channel. CF(1) has five subunits: alpha(3), beta(3), gamma(1), delta(1), epsilon(1). CF(0) has three main subunits: a(1), b(2) and c(9-12). The alpha and beta chains form an alternating ring which encloses part of the gamma chain. CF(1) is attached to CF(0) by a central stalk formed by the gamma and epsilon chains, while a peripheral stalk is formed by the delta and b chains.

Its subcellular location is the cell inner membrane. It carries out the reaction ATP + H2O + 4 H(+)(in) = ADP + phosphate + 5 H(+)(out). In terms of biological role, produces ATP from ADP in the presence of a proton gradient across the membrane. The catalytic sites are hosted primarily by the beta subunits. The polypeptide is ATP synthase subunit beta 2 (Gluconobacter oxydans (strain 621H) (Gluconobacter suboxydans)).